Here is a 786-residue protein sequence, read N- to C-terminus: DNA repair and recombination protein RAD54-like (786 aa).

Residues 2-9 form a required for chromatin remodeling, strand pairing activities and coupling of ATPase activity region; the sequence is RRSLAPSQ. Phosphothreonine is present on Thr-22. The region spanning 165 to 340 is the Helicase ATP-binding domain; it reads EGKRGSFNGC…FSLVNFVNPE (176 aa). 178–185 contacts ATP; that stretch reads DEMGLGKT. Residues 291-294 carry the DEGH box motif; the sequence is DEGH. The Helicase C-terminal domain occupies 497–654; the sequence is LLDFMLAAIR…NNESVEKHFT (158 aa). Residues 738–786 form a disordered region; sequence EAKPAATTTDEDEELSDSKRKAKKTLASDDDDDEDFVLNCSSGEEFSGF. Positions 776-786 are enriched in polar residues; sequence NCSSGEEFSGF.

Belongs to the SNF2/RAD54 helicase family. As to quaternary structure, interacts (via N-terminus) with spn-A/Rad51.

The protein resides in the nucleus. Its function is as follows. Involved in mitotic DNA repair and meiotic recombination. Functions in the recombinational DNA repair pathway. Essential for interhomolog gene conversion (GC), but may have a less important role in intersister GC than spn-A/Rad51. In the presence of DNA, spn-A/Rad51 enhances the ATPase activity of okr/Rad54. The chain is DNA repair and recombination protein RAD54-like from Drosophila grimshawi (Hawaiian fruit fly).